We begin with the raw amino-acid sequence, 434 residues long: Trigger factor (434 aa).

Residues 161–246 (EDRVTVDFNG…LKKVEERELP (86 aa)) enclose the PPIase FKBP-type domain.

The protein belongs to the FKBP-type PPIase family. Tig subfamily.

It localises to the cytoplasm. The enzyme catalyses [protein]-peptidylproline (omega=180) = [protein]-peptidylproline (omega=0). Functionally, involved in protein export. Acts as a chaperone by maintaining the newly synthesized protein in an open conformation. Functions as a peptidyl-prolyl cis-trans isomerase. The sequence is that of Trigger factor from Proteus mirabilis (strain HI4320).